The following is a 509-amino-acid chain: Cytochrome P450 monooxygenase AFT11-1 (509 aa).

Position 432 (Cys-432) interacts with heme.

Belongs to the cytochrome P450 family. Heme is required as a cofactor.

It functions in the pathway mycotoxin biosynthesis. Functionally, cytochrome P450 monooxygenase; part of the gene clusters that mediate the biosynthesis of the host-selective toxins (HSTs) AF-toxins responsible for Alternaria black spot of strawberry disease by the strawberry pathotype. AF-toxin I and III are valine derivatives of 2,3-dyhydroxy-isovaleric acid and 2-hydroxy-isovaleric acid respectively, while AF II is an isoleucine derivative of 2-hydroxy-valeric acid. These derivatives are bound to a 9,10-epoxy-8-hydroxy-9-methyl-decatrienoic acid (EDA) moiety. On cellular level, AF-toxins affect plasma membrane of susceptible cells and cause a sudden increase in loss of K(+) after a few minutes of toxin treatment. The aldo-keto reductase AFTS1 catalyzes the conversion of 2-keto-isovaleric acid (2-KIV) to 2-hydroxy-isovaleric acid (2-HIV) by reduction of its ketone to an alcohol. The acyl-CoA ligase AFT1, the hydrolase AFT2 and the enoyl-CoA hydratases AFT3 and AFT6, but also the polyketide synthase AFT9, the acyl-CoA dehydrogenase AFT10, the cytochrome P450 monooxygenase AFT11 and the oxidoreductase AFT12 are all involved in the biosynthesis of the AK-, AF- and ACT-toxin common EDA structural moiety. The exact function of each enzyme, and of additional enzymes identified within the AF-toxin clusters have still to be determined. This is Cytochrome P450 monooxygenase AFT11-1 from Alternaria alternata (Alternaria rot fungus).